The following is a 341-amino-acid chain: RDSTTHQSHFRGGVGVTKISFKPHGFRAIRASVMPSEGQQQSSLGDSLVNSPHRNDVVDVIRKSAISNCLSETNLHNTVPGLVSKTRGKVRDIYDAGDYLVLVTTDRQSAFDRILASIPFKGQVLNETSLWWFERTKQIVPNAVVSAPDKNVTIAKKCSVFPVEFVARGFVTGSTDTSLWTVYNKGARNYCGNVLPDGMVKNQKLSENILTPTTKAADHDVPVTPDEIIERGLMTRSDYEEVSEKALSLFEYGQQVASEHGLILVDTKYEFGKANDGSIMLIDEVHTPDSSRYWIASSYPERFQNGLEPENIDKEFLRLWFKSHCNPYEDEVLPDAPEDLL.

The protein belongs to the SAICAR synthetase family.

Its subcellular location is the plastid. The protein localises to the chloroplast. It carries out the reaction 5-amino-1-(5-phospho-D-ribosyl)imidazole-4-carboxylate + L-aspartate + ATP = (2S)-2-[5-amino-1-(5-phospho-beta-D-ribosyl)imidazole-4-carboxamido]succinate + ADP + phosphate + 2 H(+). Its pathway is purine metabolism; IMP biosynthesis via de novo pathway; 5-amino-1-(5-phospho-D-ribosyl)imidazole-4-carboxamide from 5-amino-1-(5-phospho-D-ribosyl)imidazole-4-carboxylate: step 1/2. The polypeptide is Phosphoribosylaminoimidazole-succinocarboxamide synthase, chloroplastic (PUR7) (Vigna aconitifolia (Moth bean)).